Consider the following 145-residue polypeptide: Large ribosomal subunit protein uL13 (145 aa).

It belongs to the universal ribosomal protein uL13 family. Part of the 50S ribosomal subunit.

This protein is one of the early assembly proteins of the 50S ribosomal subunit, although it is not seen to bind rRNA by itself. It is important during the early stages of 50S assembly. This chain is Large ribosomal subunit protein uL13, found in Staphylococcus epidermidis (strain ATCC 35984 / DSM 28319 / BCRC 17069 / CCUG 31568 / BM 3577 / RP62A).